The primary structure comprises 207 residues: Guanylate kinase (207 aa).

The Guanylate kinase-like domain maps to 6-185 (GLLIVLSGPS…AKQRIQSIVE (180 aa)). ATP is bound at residue 13-20 (GPSGVGKG).

This sequence belongs to the guanylate kinase family.

It localises to the cytoplasm. The enzyme catalyses GMP + ATP = GDP + ADP. Essential for recycling GMP and indirectly, cGMP. This chain is Guanylate kinase, found in Staphylococcus saprophyticus subsp. saprophyticus (strain ATCC 15305 / DSM 20229 / NCIMB 8711 / NCTC 7292 / S-41).